A 249-amino-acid polypeptide reads, in one-letter code: Small ribosomal subunit protein uS3 (249 aa).

Residues 39–108 enclose the KH type-2 domain; the sequence is IRQLINKKLA…TVAVNVAEIP (70 aa). Residues 214–249 are disordered; it reads ETFARPQRRDRDERRPEGGDRPARRRPTARRRTGGE. Residues 220-235 are compositionally biased toward basic and acidic residues; it reads QRRDRDERRPEGGDRP. Residues 236–249 are compositionally biased toward basic residues; it reads ARRRPTARRRTGGE.

Belongs to the universal ribosomal protein uS3 family. As to quaternary structure, part of the 30S ribosomal subunit. Forms a tight complex with proteins S10 and S14.

Binds the lower part of the 30S subunit head. Binds mRNA in the 70S ribosome, positioning it for translation. The sequence is that of Small ribosomal subunit protein uS3 from Deinococcus radiodurans (strain ATCC 13939 / DSM 20539 / JCM 16871 / CCUG 27074 / LMG 4051 / NBRC 15346 / NCIMB 9279 / VKM B-1422 / R1).